Consider the following 45-residue polypeptide: Myotoxin-3 (45 aa).

3 cysteine pairs are disulfide-bonded: Cys-4/Cys-36, Cys-11/Cys-30, and Cys-18/Cys-37.

Monomer. In terms of tissue distribution, expressed by the venom gland.

It localises to the secreted. Cationic peptide that possesses multiple functions. It acts as a cell-penetrating peptide (CPP), and as a potent voltage-gated potassium channel (Kv) inhibitor. It exhibits antimicrobial activities, hind limb paralysis, and severe muscle necrosis by a non-enzymatic mechanism. This is Myotoxin-3 from Crotalus viridis viridis (Prairie rattlesnake).